A 474-amino-acid polypeptide reads, in one-letter code: Bifunctional protein HldE (474 aa).

The interval 1 to 318 is ribokinase; that stretch reads MKLSMPRFDQ…RAVQREQGSE (318 aa). 194–197 is a binding site for ATP; it reads NLSE. D263 is a catalytic residue. Positions 343–474 are cytidylyltransferase; that stretch reads FTNGCFDILH…AIVEKIRQKG (132 aa).

This sequence in the N-terminal section; belongs to the carbohydrate kinase PfkB family. The protein in the C-terminal section; belongs to the cytidylyltransferase family. In terms of assembly, homodimer.

The catalysed reaction is D-glycero-beta-D-manno-heptose 7-phosphate + ATP = D-glycero-beta-D-manno-heptose 1,7-bisphosphate + ADP + H(+). It carries out the reaction D-glycero-beta-D-manno-heptose 1-phosphate + ATP + H(+) = ADP-D-glycero-beta-D-manno-heptose + diphosphate. The protein operates within nucleotide-sugar biosynthesis; ADP-L-glycero-beta-D-manno-heptose biosynthesis; ADP-L-glycero-beta-D-manno-heptose from D-glycero-beta-D-manno-heptose 7-phosphate: step 1/4. It functions in the pathway nucleotide-sugar biosynthesis; ADP-L-glycero-beta-D-manno-heptose biosynthesis; ADP-L-glycero-beta-D-manno-heptose from D-glycero-beta-D-manno-heptose 7-phosphate: step 3/4. Its function is as follows. Catalyzes the phosphorylation of D-glycero-D-manno-heptose 7-phosphate at the C-1 position to selectively form D-glycero-beta-D-manno-heptose-1,7-bisphosphate. Catalyzes the ADP transfer from ATP to D-glycero-beta-D-manno-heptose 1-phosphate, yielding ADP-D-glycero-beta-D-manno-heptose. This chain is Bifunctional protein HldE, found in Pseudomonas paraeruginosa (strain DSM 24068 / PA7) (Pseudomonas aeruginosa (strain PA7)).